The chain runs to 577 residues: Anthranilate synthase alpha subunit 1, chloroplastic (577 aa).

A chloroplast-targeting transit peptide spans M1–R34.

Belongs to the anthranilate synthase component I family. As to quaternary structure, heterotetramer consisting of two non-identical subunits: a beta subunit and a large alpha subunit.

The protein localises to the plastid. It is found in the chloroplast. The catalysed reaction is chorismate + L-glutamine = anthranilate + pyruvate + L-glutamate + H(+). The protein operates within amino-acid biosynthesis; L-tryptophan biosynthesis; L-tryptophan from chorismate: step 1/5. With respect to regulation, feedback inhibition by tryptophan. Functionally, part of a heterotetrameric complex that catalyzes the two-step biosynthesis of anthranilate, an intermediate in the biosynthesis of L-tryptophan. In the first step, the glutamine-binding beta subunit of anthranilate synthase (AS) provides the glutamine amidotransferase activity which generates ammonia as a substrate that, along with chorismate, is used in the second step, catalyzed by the large alpha subunit of AS to produce anthranilate. This is Anthranilate synthase alpha subunit 1, chloroplastic from Oryza sativa subsp. japonica (Rice).